We begin with the raw amino-acid sequence, 527 residues long: Abrin-b (527 aa).

Gln-1 carries the pyrrolidone carboxylic acid modification. N-linked (GlcNAc...) asparagine glycosylation occurs at Asn-110. Residue Glu-163 is part of the active site. 3 disulfide bridges follow: Cys-246–Cys-268, Cys-285–Cys-304, and Cys-328–Cys-345. Residues 272-399 (YEPTVRIGGR…YLMRQGWRTG (128 aa)) form the Ricin B-type lectin 1 domain. The stretch at 282 to 324 (NGMCVDVYDDGYHNGNRIIAWKCKDRLEENQLWTLKSDKTIRS) is one 1-alpha repeat. The stretch at 325 to 365 (NGKCLTTEGYAPGNYVMIYDCTSAVAEATYWEIWDNGTIIN) is one 1-beta repeat. N-linked (GlcNAc...) asparagine glycosylation is found at Asn-360 and Asn-400. Residues 368 to 400 (SALVLSAESSSMGGTLTVQTNEYLMRQGWRTGN) form a 1-gamma repeat. The Ricin B-type lectin 2 domain maps to 402 to 526 (TSPFVTSISG…GKPNQIWLTL (125 aa)). The 2-alpha repeat unit spans residues 413-448 (SDLCMQAQGSNVWLAYCDNNKKEQQWALYTDGSIRS). 2 disulfide bridges follow: Cys-416/Cys-429 and Cys-455/Cys-472. Residues 452–491 (TNNCLTSKDHKQGSPIVLMACSNGWASQRWLFRNDGSIYN) form a 2-beta repeat. A 2-gamma repeat occupies 494 to 527 (DDMVMDVKRSDPSLKEIILHPYHGKPNQIWLTLF).

The protein in the N-terminal section; belongs to the ribosome-inactivating protein family. Type 2 RIP subfamily. In terms of assembly, disulfide-linked dimer of A and B chains.

The enzyme catalyses Endohydrolysis of the N-glycosidic bond at one specific adenosine on the 28S rRNA.. Its function is as follows. The A chain is responsible for inhibiting protein synthesis through the catalytic inactivation of 60S ribosomal subunits by removing adenine from position 4,324 of 28S rRNA. Abrin-a is more toxic than ricin. Functionally, the B chain is a galactose-specific lectin that facilitates the binding of abrin to the cell membrane that precedes endocytosis. This is Abrin-b from Abrus precatorius (Indian licorice).